Here is a 322-residue protein sequence, read N- to C-terminus: Probable F-box protein At1g60180 (322 aa).

In terms of domain architecture, F-box spans 45–88 (FCELSDECIAKILSGCPILESLTLSHCIYLTVLDLSKSLRLRTL).

This chain is Probable F-box protein At1g60180, found in Arabidopsis thaliana (Mouse-ear cress).